We begin with the raw amino-acid sequence, 140 residues long: ATP synthase epsilon chain (140 aa).

The protein belongs to the ATPase epsilon chain family. As to quaternary structure, F-type ATPases have 2 components, CF(1) - the catalytic core - and CF(0) - the membrane proton channel. CF(1) has five subunits: alpha(3), beta(3), gamma(1), delta(1), epsilon(1). CF(0) has three main subunits: a, b and c.

The protein resides in the cell inner membrane. Produces ATP from ADP in the presence of a proton gradient across the membrane. The sequence is that of ATP synthase epsilon chain from Yersinia enterocolitica serotype O:8 / biotype 1B (strain NCTC 13174 / 8081).